The sequence spans 552 residues: Probable protein kinase UbiB (552 aa).

The Protein kinase domain occupies 121-504 (HFDTVPLASA…QGLQRRVVNA (384 aa)). Residues 127–135 (LASASISQV) and K149 contribute to the ATP site. D284 (proton acceptor) is an active-site residue. The next 2 helical transmembrane spans lie at 501-521 (VVNAIVGSGLLVAAAVLYGLH) and 530-550 (IPVWSLISGCIGALALFSAWW).

The protein belongs to the ABC1 family. UbiB subfamily.

It is found in the cell inner membrane. The protein operates within cofactor biosynthesis; ubiquinone biosynthesis [regulation]. Its function is as follows. Is probably a protein kinase regulator of UbiI activity which is involved in aerobic coenzyme Q (ubiquinone) biosynthesis. This is Probable protein kinase UbiB from Xylella fastidiosa (strain M23).